The following is a 121-amino-acid chain: Large ribosomal subunit protein uL22 (121 aa).

Belongs to the universal ribosomal protein uL22 family. In terms of assembly, part of the 50S ribosomal subunit.

Functionally, this protein binds specifically to 23S rRNA; its binding is stimulated by other ribosomal proteins, e.g. L4, L17, and L20. It is important during the early stages of 50S assembly. It makes multiple contacts with different domains of the 23S rRNA in the assembled 50S subunit and ribosome. The globular domain of the protein is located near the polypeptide exit tunnel on the outside of the subunit, while an extended beta-hairpin is found that lines the wall of the exit tunnel in the center of the 70S ribosome. The chain is Large ribosomal subunit protein uL22 from Pseudarthrobacter chlorophenolicus (strain ATCC 700700 / DSM 12829 / CIP 107037 / JCM 12360 / KCTC 9906 / NCIMB 13794 / A6) (Arthrobacter chlorophenolicus).